Reading from the N-terminus, the 369-residue chain is Trans-enoyl reductase pyiC (369 aa).

Cys52–Lys55 contributes to the NADP(+) binding site. Thr137 to Met144 lines the substrate pocket. NADP(+)-binding positions include Ser195–Asn198, Tyr213, and Leu260–Glu261. Gly280–Leu284 is a binding site for substrate. An NADP(+)-binding site is contributed by Val349–Ser350.

It belongs to the zinc-containing alcohol dehydrogenase family. Monomer.

Its pathway is mycotoxin biosynthesis. Functionally, trans-enoyl reductase; part of the gene cluster that mediates the biosynthesis of the mycotoxin pyrichalasin H, a tyrosine-derived cytochalasan that inhibits the growth of rice seedlings, but also inhibits lymphocyte capping and actin polymerization and alters cell morphology. Pyrichalasin H is indicated as the responsible agent for the genus-specific pathogenicity of M.grisea toward crabgrass. The first step in the pathway is catalyzed by the O-methyltransferase pyiA which methylates free tyrosine to generate the precursor O-methyltyrosine. The hybrid PKS-NRPS pyiS, assisted by the enoyl reductase pyiC, are responsible for fusion of the O-methyltyrosine precursor and the polyketide backbone. The polyketide synthase module (PKS) of pyiS is responsible for the synthesis of the polyketide backbone and the downstream nonribosomal peptide synthetase (NRPS) amidates the carboxyl end of the polyketide with the O-methyltyrosine precursor. As the NRPS A-domain demonstrates substrate tolerance, pyiS can also use phenylalanine, tyrosine and even para-chlorophenylalanine as amino acid precursor, which leads to the production of novel cytochalasans, including halogenated cytochalasans. Because pyiS lacks a designated enoylreductase (ER) domain, the required activity is provided the enoyl reductase pyiC. Reduction by the hydrolyase pyiE, followed by dehydration and intra-molecular Diels-Alder cyclization by the Diels-Alderase pyiF then yield the required isoindolone-fused macrocycle. The tailoring cytochrome P450 monooxygenases piyD and piyG catalyze the hydroxylation at C-18 and C-7, respectivily, whereas the short-chain dehydrogenase/reductase pyiH reduces the carbonyl at C-21 in preparation for the transfer of an acetyl group by the acetyltransferase pyiB. These 3 reactions whose order is not clear yet, lead to the production of O-methylpyrichalasin J, a deacetylated pyrichalasin H. Finally, pyiB to converts O-methylpyrichalasin J into the final product pyrichalasin H via acetylation of C-21. This is Trans-enoyl reductase pyiC from Pyricularia grisea (Crabgrass-specific blast fungus).